We begin with the raw amino-acid sequence, 298 residues long: N-acetylmuramic acid 6-phosphate etherase (298 aa).

An SIS domain is found at 55 to 218; sequence IHAQVSGGGR…STGLMIKSGK (164 aa). Residue E83 is the Proton donor of the active site. Residue E114 is part of the active site.

The protein belongs to the GCKR-like family. MurNAc-6-P etherase subfamily. In terms of assembly, homodimer.

It carries out the reaction N-acetyl-D-muramate 6-phosphate + H2O = N-acetyl-D-glucosamine 6-phosphate + (R)-lactate. The protein operates within amino-sugar metabolism; 1,6-anhydro-N-acetylmuramate degradation. Its pathway is amino-sugar metabolism; N-acetylmuramate degradation. It functions in the pathway cell wall biogenesis; peptidoglycan recycling. Specifically catalyzes the cleavage of the D-lactyl ether substituent of MurNAc 6-phosphate, producing GlcNAc 6-phosphate and D-lactate. Together with AnmK, is also required for the utilization of anhydro-N-acetylmuramic acid (anhMurNAc) either imported from the medium or derived from its own cell wall murein, and thus plays a role in cell wall recycling. This is N-acetylmuramic acid 6-phosphate etherase from Shigella flexneri serotype 5b (strain 8401).